The sequence spans 103 residues: NADH dehydrogenase [ubiquinone] 1 beta subcomplex subunit 7 (103 aa).

A CHCH domain is found at 27-69; it reads RDMCAHLLIPLNKCRQAEFYLPWKCEDERHVYEKCEYELVMER. 2 short sequence motifs (cx9C motif) span residues 30 to 40 and 51 to 61; these read CAHLLIPLNKC and CEDERHVYEKC. 2 disulfides stabilise this stretch: Cys-30–Cys-61 and Cys-40–Cys-51.

This sequence belongs to the complex I NDUFB7 subunit family. Complex I is composed of at least 49 different subunits.

It is found in the mitochondrion. Its subcellular location is the mitochondrion inner membrane. The protein localises to the mitochondrion intermembrane space. In terms of biological role, accessory subunit of the mitochondrial membrane respiratory chain NADH dehydrogenase (Complex I), that is believed not to be involved in catalysis. Complex I functions in the transfer of electrons from NADH to the respiratory chain. The immediate electron acceptor for the enzyme is believed to be ubiquinone. This Arabidopsis thaliana (Mouse-ear cress) protein is NADH dehydrogenase [ubiquinone] 1 beta subcomplex subunit 7.